The sequence spans 208 residues: NAD-dependent protein deacylase (208 aa).

The region spanning Met-1–Trp-208 is the Deacetylase sirtuin-type domain. Gly-10–Trp-29 contributes to the NAD(+) binding site. Substrate-binding residues include Tyr-54 and Arg-57. Position 87–90 (Gln-87–Glu-90) interacts with NAD(+). The active-site Proton acceptor is His-105. Residues Gly-170 to Ser-172 and Asn-197 to Asn-199 contribute to the NAD(+) site.

The protein belongs to the sirtuin family. Class III subfamily.

The protein resides in the cytoplasm. It carries out the reaction N(6)-acetyl-L-lysyl-[protein] + NAD(+) + H2O = 2''-O-acetyl-ADP-D-ribose + nicotinamide + L-lysyl-[protein]. The catalysed reaction is N(6)-succinyl-L-lysyl-[protein] + NAD(+) + H2O = 2''-O-succinyl-ADP-D-ribose + nicotinamide + L-lysyl-[protein]. NAD-dependent lysine deacetylase and desuccinylase that specifically removes acetyl and succinyl groups on target proteins. Modulates the activities of several proteins which are inactive in their acylated form. In Aggregatibacter actinomycetemcomitans (Actinobacillus actinomycetemcomitans), this protein is NAD-dependent protein deacylase.